A 541-amino-acid chain; its full sequence is Zinc finger protein 329 (541 aa).

Ser50 bears the Phosphoserine mark. C2H2-type zinc fingers lie at residues 203–225, 231–253, 259–281, 287–309, 315–337, 343–365, 371–393, 399–421, 427–449, 455–477, 483–505, and 511–533; these read YRCT…HRTH, YTCN…QRIH, YECS…QRIH, YECL…QRTH, YRCN…LRIH, YECS…ERTH, FECA…QKIH, YECK…QRIH, YGCN…QRTH, YECN…QRIH, YQCP…QRLH, and SRCP…QRAH.

The protein belongs to the krueppel C2H2-type zinc-finger protein family.

It is found in the nucleus. In terms of biological role, may be involved in transcriptional regulation. The polypeptide is Zinc finger protein 329 (ZNF329) (Homo sapiens (Human)).